A 578-amino-acid polypeptide reads, in one-letter code: Maltogenic alpha-amylase (578 aa).

It belongs to the glycosyl hydrolase 13 family.

It catalyses the reaction hydrolysis of (1-&gt;4)-alpha-D-glucosidic linkages in polysaccharides so as to remove successive alpha-maltose residues from the non-reducing ends of the chains.. Its function is as follows. Converts starch into maltose. In contrary to other maltogenic alpha-amylases BlmA cannot hydrolyze 1,4-alpha-glucosidic linkage next to 1,6-alpha-glucosidic linkages. This chain is Maltogenic alpha-amylase (blmA), found in Bacillus licheniformis.